The primary structure comprises 354 residues: S-adenosylmethionine:tRNA ribosyltransferase-isomerase (354 aa).

This sequence belongs to the QueA family. In terms of assembly, monomer.

It localises to the cytoplasm. It carries out the reaction 7-aminomethyl-7-carbaguanosine(34) in tRNA + S-adenosyl-L-methionine = epoxyqueuosine(34) in tRNA + adenine + L-methionine + 2 H(+). Its pathway is tRNA modification; tRNA-queuosine biosynthesis. In terms of biological role, transfers and isomerizes the ribose moiety from AdoMet to the 7-aminomethyl group of 7-deazaguanine (preQ1-tRNA) to give epoxyqueuosine (oQ-tRNA). The protein is S-adenosylmethionine:tRNA ribosyltransferase-isomerase of Salmonella schwarzengrund (strain CVM19633).